The chain runs to 419 residues: Light-independent protochlorophyllide reductase subunit N (419 aa).

Positions 17, 42, and 103 each coordinate [4Fe-4S] cluster.

The protein belongs to the BchN/ChlN family. Protochlorophyllide reductase is composed of three subunits; ChlL, ChlN and ChlB. Forms a heterotetramer of two ChlB and two ChlN subunits. Requires [4Fe-4S] cluster as cofactor.

It carries out the reaction chlorophyllide a + oxidized 2[4Fe-4S]-[ferredoxin] + 2 ADP + 2 phosphate = protochlorophyllide a + reduced 2[4Fe-4S]-[ferredoxin] + 2 ATP + 2 H2O. It functions in the pathway porphyrin-containing compound metabolism; chlorophyll biosynthesis (light-independent). Component of the dark-operative protochlorophyllide reductase (DPOR) that uses Mg-ATP and reduced ferredoxin to reduce ring D of protochlorophyllide (Pchlide) to form chlorophyllide a (Chlide). This reaction is light-independent. The NB-protein (ChlN-ChlB) is the catalytic component of the complex. The protein is Light-independent protochlorophyllide reductase subunit N of Prochlorococcus marinus (strain NATL1A).